Consider the following 670-residue polypeptide: MSKSFKLHSEFKPAGDQPEAIRKLEEGLENGLAHQTLLGVTGSGKTFTVANVIADLNRPTMVLAPNKTLAAQLYGEMKEFFPENAVEYFVSYYDYYQPEAYVPSSDTFIEKDASVNEHIEQMRLSATKALLERRDVVVVASVSAIYGLGDPDLYLKMMLHLTKGMIIDQRSILRRLSELQYSRNDQVFQRGTFRVRGEVIDIFPAESDEWALRVELFDEEVERLSIFDPLTGQLQHEVPRFTVYPKTHYVTPRERILQAMEDIKVELAERRKVLLANNKLIEEQRITQRTQFDLEMMNELGYCSGIENYSRYLSGRGPGEPPPTLFDYLPSDGLLIVDESHVTIPQIGGMYKGDRSRKETLVEYGFRLPSALDNRPMRFEEFEALAPQTIYVSATPGKYELEKSGGDVIDQVVRPTGLLDPLIEVRPVATQVDDLLSEIRIRAAINERVLVTTLTKRMAEDLTEYLEEHGARVRYLHSDIDTVERVEIIRDLRLGEFDVLVGINLLREGLDMPEVSLVAILDADKEGFLRSERSLIQTIGRAARNLNGKAILYGDRITASMEKAIGETERRRAKQQAYNEERGIIPQGLNKKIGDILQLGQPSTRGKGKGRGGKVADTNNYQSLAPKALDQKIRELEAKMYTHAQNLEFEQAAELRDQVHQLRQQFIAIS.

The Helicase ATP-binding domain maps to Glu26 to Arg183. Gly39 to Thr46 contributes to the ATP binding site. Positions Tyr92–Val115 match the Beta-hairpin motif. The 167-residue stretch at Gln431 to Leu597 folds into the Helicase C-terminal domain. A disordered region spans residues Gly600 to Asn620. In terms of domain architecture, UVR spans Asp630 to Gln665.

The protein belongs to the UvrB family. In terms of assembly, forms a heterotetramer with UvrA during the search for lesions. Interacts with UvrC in an incision complex.

The protein resides in the cytoplasm. Its function is as follows. The UvrABC repair system catalyzes the recognition and processing of DNA lesions. A damage recognition complex composed of 2 UvrA and 2 UvrB subunits scans DNA for abnormalities. Upon binding of the UvrA(2)B(2) complex to a putative damaged site, the DNA wraps around one UvrB monomer. DNA wrap is dependent on ATP binding by UvrB and probably causes local melting of the DNA helix, facilitating insertion of UvrB beta-hairpin between the DNA strands. Then UvrB probes one DNA strand for the presence of a lesion. If a lesion is found the UvrA subunits dissociate and the UvrB-DNA preincision complex is formed. This complex is subsequently bound by UvrC and the second UvrB is released. If no lesion is found, the DNA wraps around the other UvrB subunit that will check the other stand for damage. In Yersinia enterocolitica serotype O:8 / biotype 1B (strain NCTC 13174 / 8081), this protein is UvrABC system protein B.